The primary structure comprises 162 residues: Cyclic pyranopterin monophosphate synthase (162 aa).

Residues 75 to 77 (LCH) and 113 to 114 (ME) each bind substrate. D128 is an active-site residue.

This sequence belongs to the MoaC family. Homohexamer; trimer of dimers.

The catalysed reaction is (8S)-3',8-cyclo-7,8-dihydroguanosine 5'-triphosphate = cyclic pyranopterin phosphate + diphosphate. Its pathway is cofactor biosynthesis; molybdopterin biosynthesis. In terms of biological role, catalyzes the conversion of (8S)-3',8-cyclo-7,8-dihydroguanosine 5'-triphosphate to cyclic pyranopterin monophosphate (cPMP). The chain is Cyclic pyranopterin monophosphate synthase from Burkholderia lata (strain ATCC 17760 / DSM 23089 / LMG 22485 / NCIMB 9086 / R18194 / 383).